The following is a 477-amino-acid chain: Chromosomal replication initiator protein DnaA (477 aa).

Positions 1-87 (MSDRSDPTHA…AGVSNFAIVV (87 aa)) are domain I, interacts with DnaA modulators. The segment at 87 to 132 (VNPEIAQDAFAQHPEPAAEQPYIETPTITAPTDNPGLPASPSRGDS) is domain II. The segment at 112–131 (PTITAPTDNPGLPASPSRGD) is disordered. The tract at residues 133-349 (RLNPKYGFDT…GTLIRVTAFA (217 aa)) is domain III, AAA+ region. ATP contacts are provided by G177, G179, K180, and T181. The tract at residues 350 to 477 (SLNKTPVDLA…IKQNHRYGKM (128 aa)) is domain IV, binds dsDNA.

This sequence belongs to the DnaA family. In terms of assembly, oligomerizes as a right-handed, spiral filament on DNA at oriC.

Its subcellular location is the cytoplasm. Functionally, plays an essential role in the initiation and regulation of chromosomal replication. ATP-DnaA binds to the origin of replication (oriC) to initiate formation of the DNA replication initiation complex once per cell cycle. Binds the DnaA box (a 9 base pair repeat at the origin) and separates the double-stranded (ds)DNA. Forms a right-handed helical filament on oriC DNA; dsDNA binds to the exterior of the filament while single-stranded (ss)DNA is stabiized in the filament's interior. The ATP-DnaA-oriC complex binds and stabilizes one strand of the AT-rich DNA unwinding element (DUE), permitting loading of DNA polymerase. After initiation quickly degrades to an ADP-DnaA complex that is not apt for DNA replication. Binds acidic phospholipids. The chain is Chromosomal replication initiator protein DnaA from Clavibacter michiganensis subsp. michiganensis (strain NCPPB 382).